The following is an 85-amino-acid chain: N.vectensis toxin 1 5 (85 aa).

Positions 1 to 20 (MASFKIVIVCLALLVAVACA) are cleaved as a signal peptide. Residues 21-36 (RRRDMMSDDELDFHLS) constitute a propeptide that is removed on maturation. Intrachain disulfides connect C42/C82, C44/C72, and C65/C83.

This sequence belongs to the sea anemone sodium channel inhibitory toxin family. Type II subfamily. As to expression, expressed in ectodermal glands and in clumps outside of the extodermal layer. Is not expressed in nematocytes. In adult female tissues, shows similar expression levels in mesenteries (gametes-producing tissue), tentacles, pharynx and physa.

It is found in the secreted. Binds to site 3 of voltage-gated sodium channels and inhibits the inactivation process. Is highly active on DmNav1/TipE (drosophila) and is only extremely weakly active on rat Nav1.4-beta-1/SCN4A-SCN1B, and on human Nav1.5-beta-1/SCN5A-beta-1. This reveals high specificity for arthropod over mammalian channels. In vivo, when released into the medium, this recombinant toxin induces impaired swimming, paralysis and death of the crustacean A.nauplii within several hours. Also causes paralysis of cherry shrimps immediately after injection at very low doses. Its effect on zebrafish (D.rerio) larvae is also rapid, since it induces tail twitching accompanied by impaired swimming after 20 minutes and complete paralysis within 45 minutes. It has also been observed to cause death of zebrafish larvae within 1 hour. The chain is N.vectensis toxin 1 5 from Nematostella vectensis (Starlet sea anemone).